Here is a 49-residue protein sequence, read N- to C-terminus: Chitin-binding lectin (49 aa).

The 44-residue stretch at aspartate 2–cysteine 45 folds into the Chitin-binding type-1 domain. Cystine bridges form between cysteine 5–cysteine 22, cysteine 16–cysteine 28, cysteine 21–cysteine 35, and cysteine 39–cysteine 43.

In terms of assembly, homodimer; disulfide-linked.

Its function is as follows. Chitin-binding lectin which is specific for N-acetylglucosamine oligomers. The chain is Chitin-binding lectin from Viscum album (European mistletoe).